The chain runs to 247 residues: E3 ubiquitin-protein ligase RNF182 (247 aa).

The RING-type zinc-finger motif lies at 20-68 (CKICYNRYNLKQRKPKVLECCHRVCAKCLYKIIDFGDSPQGVIVCPFCR). Transmembrane regions (helical) follow at residues 184–204 (VLVW…IYLL) and 211–231 (LGVV…VYGF).

In terms of assembly, interacts with ATP6V0C. As to expression, up-regulated in neuronal cells subjected to cell death-inducing injuries, such as oxygen and glucose deprivation (at protein level). Could be up-regulated in Alzheimer disease brains. Highly expressed in innate immune organs such as lymph nodes and spleen and in immune cells such as macrophages and dendritic cells.

The protein localises to the membrane. It is found in the cytoplasm. It catalyses the reaction S-ubiquitinyl-[E2 ubiquitin-conjugating enzyme]-L-cysteine + [acceptor protein]-L-lysine = [E2 ubiquitin-conjugating enzyme]-L-cysteine + N(6)-ubiquitinyl-[acceptor protein]-L-lysine.. It participates in protein modification; protein ubiquitination. Functionally, E3 ubiquitin-protein ligase that mediates the ubiquitination of ATP6V0C and targets it to degradation via the ubiquitin-proteasome pathway. Also plays a role in the inhibition of TLR-triggered innate immune response by mediating 'Lys'-48-linked ubiquitination and subsequent degradation of NF-kappa-B component RELA. The protein is E3 ubiquitin-protein ligase RNF182 (RNF182) of Homo sapiens (Human).